Here is a 145-residue protein sequence, read N- to C-terminus: Cell division protein SepF (145 aa).

Belongs to the SepF family. Homodimer. Interacts with FtsZ.

It is found in the cytoplasm. In terms of biological role, cell division protein that is part of the divisome complex and is recruited early to the Z-ring. Probably stimulates Z-ring formation, perhaps through the cross-linking of FtsZ protofilaments. Its function overlaps with FtsA. This Lactobacillus acidophilus (strain ATCC 700396 / NCK56 / N2 / NCFM) protein is Cell division protein SepF.